A 225-amino-acid polypeptide reads, in one-letter code: Fibronectin type III domain-containing protein (225 aa).

A signal peptide spans 1–17 (MFSFGIILLTVVSFTNA). The Fibronectin type-III domain maps to 106–206 (PPTNVIVEST…MPLNVKTPDI (101 aa)).

As to expression, component of the organic matrix of calcified shell layers like nacre and prisms.

The protein resides in the secreted. This Mytilus californianus (California mussel) protein is Fibronectin type III domain-containing protein.